The primary structure comprises 372 residues: Putative 26S proteasome regulatory subunit homolog MTBMA_c13930 (372 aa).

164–171 (GSPGTGKT) serves as a coordination point for ATP.

This sequence belongs to the AAA ATPase family.

Functionally, the 26S proteasome is involved in the ATP-dependent degradation of ubiquitinated proteins. The regulatory (or ATPase) complex confers ATP dependency and substrate specificity to the 26S complex. The chain is Putative 26S proteasome regulatory subunit homolog MTBMA_c13930 from Methanothermobacter marburgensis (strain ATCC BAA-927 / DSM 2133 / JCM 14651 / NBRC 100331 / OCM 82 / Marburg) (Methanobacterium thermoautotrophicum).